We begin with the raw amino-acid sequence, 222 residues long: MELTLHEARVIGCLLEKEVTTPEQYPLSLNALTLACNQKTSRDPVLDLSEAKVQDALDSLNKKRLISEQSGFGSRVVKYKHRFCNTEFSELQLSNAAVAIVCLLLLRGPQTPGELRTRSNRLHDFKDVLEVEACIKQLMERDKPVLAQLPREPGKRECRYTELFSQGAEQINAASLSADSPSADSNSLNAQDRQQLEARVTQLEEQVAKLKDKLDSLIASLS.

Belongs to the UPF0502 family.

The protein is UPF0502 protein Shewmr7_1629 of Shewanella sp. (strain MR-7).